The primary structure comprises 188 residues: GMP synthase [glutamine-hydrolyzing] subunit A (188 aa).

The region spanning 3–188 (KVLVVAFGGQ…FQNFVELCKR (186 aa)) is the Glutamine amidotransferase type-1 domain. Residue C79 is the Nucleophile of the active site. Catalysis depends on residues H166 and E168.

In terms of assembly, heterodimer composed of a glutamine amidotransferase subunit (A) and a GMP-binding subunit (B).

It carries out the reaction XMP + L-glutamine + ATP + H2O = GMP + L-glutamate + AMP + diphosphate + 2 H(+). It functions in the pathway purine metabolism; GMP biosynthesis; GMP from XMP (L-Gln route): step 1/1. Functionally, catalyzes the synthesis of GMP from XMP. The protein is GMP synthase [glutamine-hydrolyzing] subunit A of Ignicoccus hospitalis (strain KIN4/I / DSM 18386 / JCM 14125).